The sequence spans 428 residues: D-amino acid dehydrogenase (428 aa).

3–17 (VVVLGSGVVGVTSAY) is a binding site for FAD.

This sequence belongs to the DadA oxidoreductase family. FAD serves as cofactor.

It catalyses the reaction a D-alpha-amino acid + A + H2O = a 2-oxocarboxylate + AH2 + NH4(+). It participates in amino-acid degradation; D-alanine degradation; NH(3) and pyruvate from D-alanine: step 1/1. In terms of biological role, oxidative deamination of D-amino acids. The protein is D-amino acid dehydrogenase of Paraburkholderia phytofirmans (strain DSM 17436 / LMG 22146 / PsJN) (Burkholderia phytofirmans).